A 429-amino-acid polypeptide reads, in one-letter code: MEKLLIEGGRALNGTIRVSGAKNSAVALIPATILADTPVTIGGVPNISDVKMLGDLLEEIGGRVTYGQEEEMVVDPSNMVAMPLPNGKVKKLRASYYLMGAMLGRFKKAVIGLPGGCHLGPRPIDQHIKGFEALGAHVTNEQGAIYLRADELRGARIYLDVVSVGATINIMLAAVRAKGRTVIENAAKEPEIIDVATLLTSMGARIKGAGTDVIRIDGVDSLHGCHHTIIPDRIEAGTYMILGAASGGEVTVDNVIPQHLESVTAKLREAGVQVETNDDQITVNGDRRLKVVDIKTLVYPGFPTDLQQPFTTLLTKAHGTGVVTDTIYGARFKHIDELRRMNAQIKVEGRSAIVTGPVLLQGAKVKASDLRAGAALVIAGLMADGITEVTGLEHIDRGYENIVDKLKGLGANIWREQMTKQEIEEMKNA.

Phosphoenolpyruvate is bound at residue 22 to 23; that stretch reads KN. Residue Arg-93 coordinates UDP-N-acetyl-alpha-D-glucosamine. The Proton donor role is filled by Cys-117. The residue at position 117 (Cys-117) is a 2-(S-cysteinyl)pyruvic acid O-phosphothioketal. UDP-N-acetyl-alpha-D-glucosamine is bound by residues 122–126, Asp-305, and Ile-327; that span reads RPIDQ.

It belongs to the EPSP synthase family. MurA subfamily.

It localises to the cytoplasm. The catalysed reaction is phosphoenolpyruvate + UDP-N-acetyl-alpha-D-glucosamine = UDP-N-acetyl-3-O-(1-carboxyvinyl)-alpha-D-glucosamine + phosphate. The protein operates within cell wall biogenesis; peptidoglycan biosynthesis. Functionally, cell wall formation. Adds enolpyruvyl to UDP-N-acetylglucosamine. The protein is UDP-N-acetylglucosamine 1-carboxyvinyltransferase 2 of Bacillus anthracis.